We begin with the raw amino-acid sequence, 204 residues long: Large ribosomal subunit protein uL4 (204 aa).

The disordered stretch occupies residues 52-76 (AEVRGGGKKPWAQKGGGRARAGSRR).

Belongs to the universal ribosomal protein uL4 family. Part of the 50S ribosomal subunit.

Functionally, one of the primary rRNA binding proteins, this protein initially binds near the 5'-end of the 23S rRNA. It is important during the early stages of 50S assembly. It makes multiple contacts with different domains of the 23S rRNA in the assembled 50S subunit and ribosome. In terms of biological role, forms part of the polypeptide exit tunnel. The chain is Large ribosomal subunit protein uL4 from Sulfurimonas denitrificans (strain ATCC 33889 / DSM 1251) (Thiomicrospira denitrificans (strain ATCC 33889 / DSM 1251)).